The primary structure comprises 117 residues: DNA-directed RNA polymerase subunit omega (117 aa).

The protein belongs to the RNA polymerase subunit omega family. In terms of assembly, the RNAP catalytic core consists of 2 alpha, 1 beta, 1 beta' and 1 omega subunit. When a sigma factor is associated with the core the holoenzyme is formed, which can initiate transcription.

The catalysed reaction is RNA(n) + a ribonucleoside 5'-triphosphate = RNA(n+1) + diphosphate. Functionally, promotes RNA polymerase assembly. Latches the N- and C-terminal regions of the beta' subunit thereby facilitating its interaction with the beta and alpha subunits. This is DNA-directed RNA polymerase subunit omega from Ruegeria pomeroyi (strain ATCC 700808 / DSM 15171 / DSS-3) (Silicibacter pomeroyi).